Consider the following 67-residue polypeptide: Small ribosomal subunit protein eS17 (67 aa).

This sequence belongs to the eukaryotic ribosomal protein eS17 family.

The polypeptide is Small ribosomal subunit protein eS17 (Korarchaeum cryptofilum (strain OPF8)).